Reading from the N-terminus, the 375-residue chain is Growth/differentiation factor 8 (375 aa).

The N-terminal stretch at 1 to 18 is a signal peptide; it reads MQRLQICVYIYLFVLIVA. Positions 19 to 266 are excised as a propeptide; sequence GPVDLSENSE…VTDTPKRSRR (248 aa). The N-linked (GlcNAc...) asparagine glycan is linked to Asn71. 3 disulfides stabilise this stretch: Cys281–Cys340, Cys309–Cys372, and Cys313–Cys374.

It belongs to the TGF-beta family. Homodimer; disulfide-linked. Interacts with WFIKKN2, leading to inhibit its activity. Interacts with FSTL3. In terms of processing, synthesized as large precursor molecule that undergoes proteolytic cleavage to generate an N-terminal propeptide and a disulfide linked C-terminal dimer, which is the biologically active molecule. The circulating form consists of a latent complex of the C-terminal dimer and other proteins, including its propeptide, which maintain the C-terminal dimer in a latent, inactive state. Ligand activation requires additional cleavage of the prodomain by a tolloid-like metalloproteinase.

Its subcellular location is the secreted. Its function is as follows. Acts specifically as a negative regulator of skeletal muscle growth. The chain is Growth/differentiation factor 8 (MSTN) from Vulpes vulpes (Red fox).